The primary structure comprises 342 residues: Ribosomal RNA small subunit methyltransferase C (342 aa).

It belongs to the methyltransferase superfamily. RsmC family. In terms of assembly, monomer.

The protein resides in the cytoplasm. The enzyme catalyses guanosine(1207) in 16S rRNA + S-adenosyl-L-methionine = N(2)-methylguanosine(1207) in 16S rRNA + S-adenosyl-L-homocysteine + H(+). In terms of biological role, specifically methylates the guanine in position 1207 of 16S rRNA in the 30S particle. The chain is Ribosomal RNA small subunit methyltransferase C from Shewanella sp. (strain MR-7).